The sequence spans 450 residues: Hyaluronidase-1 (450 aa).

The N-terminal stretch at 1–35 (MRPFSLEVSLHLPWAMAAHLLPVCTLFLNLLSMTQ) is a signal peptide. Cystine bridges form between C58–C348 and C222–C236. N-linked (GlcNAc...) asparagine glycosylation is present at N85. Residue E146 is the Proton donor of the active site. N-linked (GlcNAc...) asparagine glycosylation is found at N231 and N365. 3 disulfide bridges follow: C373–C384, C378–C433, and C435–C444. The N-linked (GlcNAc...) asparagine glycan is linked to N398. An EGF-like domain is found at 433–444 (CRCYRGWRGTRC).

It belongs to the glycosyl hydrolase 56 family.

The protein localises to the secreted. Its subcellular location is the lysosome. The enzyme catalyses Random hydrolysis of (1-&gt;4)-linkages between N-acetyl-beta-D-glucosamine and D-glucuronate residues in hyaluronate.. Its function is as follows. May have a role in promoting tumor progression. May block the TGFB1-enhanced cell growth. In Bos taurus (Bovine), this protein is Hyaluronidase-1 (HYAL1).